A 523-amino-acid chain; its full sequence is 2-isopropylmalate synthase (523 aa).

The Pyruvate carboxyltransferase domain occupies 5–267 (VIIFDTTLRD…ETGINAKEIH (263 aa)). Positions 14, 202, 204, and 238 each coordinate Mn(2+). The interval 392-523 (QLKQLVVHSD…QQKARSLGGV (132 aa)) is regulatory domain.

Belongs to the alpha-IPM synthase/homocitrate synthase family. LeuA type 1 subfamily. As to quaternary structure, homodimer. Requires Mn(2+) as cofactor.

The protein localises to the cytoplasm. It carries out the reaction 3-methyl-2-oxobutanoate + acetyl-CoA + H2O = (2S)-2-isopropylmalate + CoA + H(+). It participates in amino-acid biosynthesis; L-leucine biosynthesis; L-leucine from 3-methyl-2-oxobutanoate: step 1/4. Functionally, catalyzes the condensation of the acetyl group of acetyl-CoA with 3-methyl-2-oxobutanoate (2-ketoisovalerate) to form 3-carboxy-3-hydroxy-4-methylpentanoate (2-isopropylmalate). This is 2-isopropylmalate synthase from Shewanella woodyi (strain ATCC 51908 / MS32).